Consider the following 130-residue polypeptide: Large ribosomal subunit protein bL12 (130 aa).

It belongs to the bacterial ribosomal protein bL12 family. Homodimer. Part of the ribosomal stalk of the 50S ribosomal subunit. Forms a multimeric L10(L12)X complex, where L10 forms an elongated spine to which 2 to 4 L12 dimers bind in a sequential fashion. Binds GTP-bound translation factors.

Its function is as follows. Forms part of the ribosomal stalk which helps the ribosome interact with GTP-bound translation factors. Is thus essential for accurate translation. In Herpetosiphon aurantiacus (strain ATCC 23779 / DSM 785 / 114-95), this protein is Large ribosomal subunit protein bL12.